Consider the following 393-residue polypeptide: UDP-glucose 6-dehydrogenase (393 aa).

NAD(+)-binding residues include Val-11, Asp-31, Lys-36, Thr-85, Thr-120, and Glu-147. Substrate contacts are provided by residues 143–147 (EFLRE), Lys-199, Asn-203, 244–248 (YNNPS), and Gly-252. Residue Tyr-254 coordinates NAD(+). Cys-255 (nucleophile) is an active-site residue. Position 258 (Lys-258) interacts with NAD(+). Lys-309 serves as a coordination point for substrate. Arg-316 serves as a coordination point for NAD(+).

The protein belongs to the UDP-glucose/GDP-mannose dehydrogenase family. As to quaternary structure, homodimer.

It catalyses the reaction UDP-alpha-D-glucose + 2 NAD(+) + H2O = UDP-alpha-D-glucuronate + 2 NADH + 3 H(+). The protein operates within nucleotide-sugar biosynthesis; UDP-alpha-D-glucuronate biosynthesis; UDP-alpha-D-glucuronate from UDP-alpha-D-glucose: step 1/1. It functions in the pathway capsule biogenesis; capsule polysaccharide biosynthesis. Functionally, catalyzes the formation of UDP-glucuronic acid which is required for capsular polysaccharide synthesis. Does not catalyze the formation of glucuronamide moiety of the capsular polysaccharide. In Campylobacter jejuni subsp. jejuni serotype O:2 (strain ATCC 700819 / NCTC 11168), this protein is UDP-glucose 6-dehydrogenase.